The chain runs to 438 residues: UDP-N-acetylmuramoylalanine--D-glutamate ligase (438 aa).

112-118 (GSNGKST) is an ATP binding site.

It belongs to the MurCDEF family.

The protein localises to the cytoplasm. It catalyses the reaction UDP-N-acetyl-alpha-D-muramoyl-L-alanine + D-glutamate + ATP = UDP-N-acetyl-alpha-D-muramoyl-L-alanyl-D-glutamate + ADP + phosphate + H(+). Its pathway is cell wall biogenesis; peptidoglycan biosynthesis. Functionally, cell wall formation. Catalyzes the addition of glutamate to the nucleotide precursor UDP-N-acetylmuramoyl-L-alanine (UMA). This is UDP-N-acetylmuramoylalanine--D-glutamate ligase from Shigella dysenteriae serotype 1 (strain Sd197).